The following is a 168-amino-acid chain: 2-C-methyl-D-erythritol 2,4-cyclodiphosphate synthase (168 aa).

2 residues coordinate a divalent metal cation: D8 and H10. 4-CDP-2-C-methyl-D-erythritol 2-phosphate is bound by residues 8 to 10 and 34 to 35; these read DLH and HS. H42 contacts a divalent metal cation. 4-CDP-2-C-methyl-D-erythritol 2-phosphate contacts are provided by residues 56–58, 61–65, 132–135, and R142; these read DIG, FPDTD, and TTTE.

The protein belongs to the IspF family. As to quaternary structure, homotrimer. The cofactor is a divalent metal cation.

The catalysed reaction is 4-CDP-2-C-methyl-D-erythritol 2-phosphate = 2-C-methyl-D-erythritol 2,4-cyclic diphosphate + CMP. It participates in isoprenoid biosynthesis; isopentenyl diphosphate biosynthesis via DXP pathway; isopentenyl diphosphate from 1-deoxy-D-xylulose 5-phosphate: step 4/6. Involved in the biosynthesis of isopentenyl diphosphate (IPP) and dimethylallyl diphosphate (DMAPP), two major building blocks of isoprenoid compounds. Catalyzes the conversion of 4-diphosphocytidyl-2-C-methyl-D-erythritol 2-phosphate (CDP-ME2P) to 2-C-methyl-D-erythritol 2,4-cyclodiphosphate (ME-CPP) with a corresponding release of cytidine 5-monophosphate (CMP). The protein is 2-C-methyl-D-erythritol 2,4-cyclodiphosphate synthase of Desulfosudis oleivorans (strain DSM 6200 / JCM 39069 / Hxd3) (Desulfococcus oleovorans).